Reading from the N-terminus, the 341-residue chain is Phosphoribosylformylglycinamidine cyclo-ligase (341 aa).

Belongs to the AIR synthase family.

It is found in the cytoplasm. The enzyme catalyses 2-formamido-N(1)-(5-O-phospho-beta-D-ribosyl)acetamidine + ATP = 5-amino-1-(5-phospho-beta-D-ribosyl)imidazole + ADP + phosphate + H(+). The protein operates within purine metabolism; IMP biosynthesis via de novo pathway; 5-amino-1-(5-phospho-D-ribosyl)imidazole from N(2)-formyl-N(1)-(5-phospho-D-ribosyl)glycinamide: step 2/2. This is Phosphoribosylformylglycinamidine cyclo-ligase from Xanthomonas euvesicatoria pv. vesicatoria (strain 85-10) (Xanthomonas campestris pv. vesicatoria).